We begin with the raw amino-acid sequence, 148 residues long: Deoxyuridine 5'-triphosphate nucleotidohydrolase (148 aa).

Substrate contacts are provided by residues 68–70, N81, 85–87, and K95; these read RSG and TID.

The protein belongs to the dUTPase family. The cofactor is Mg(2+).

The enzyme catalyses dUTP + H2O = dUMP + diphosphate + H(+). Its pathway is pyrimidine metabolism; dUMP biosynthesis; dUMP from dCTP (dUTP route): step 2/2. Its function is as follows. This enzyme is involved in nucleotide metabolism: it produces dUMP, the immediate precursor of thymidine nucleotides and it decreases the intracellular concentration of dUTP so that uracil cannot be incorporated into DNA. The polypeptide is Deoxyuridine 5'-triphosphate nucleotidohydrolase (Rickettsia felis (strain ATCC VR-1525 / URRWXCal2) (Rickettsia azadi)).